Reading from the N-terminus, the 771-residue chain is Receptor like protein 22 (771 aa).

The first 20 residues, 1–20, serve as a signal peptide directing secretion; sequence MSNLRLRLLSLVSILYCIAA. The Extracellular portion of the chain corresponds to 21 to 729; it reads LRCRPDQTET…EEEEILEWRA (709 aa). N46, N58, N80, N93, N134, and N158 each carry an N-linked (GlcNAc...) asparagine glycan. LRR repeat units lie at residues 86–110, 112–135, 136–159, 160–183, 185–206, 207–230, 232–254, 255–281, 283–303, 304–327, 329–350, and 353–377; these read LSHLRYLNLSFNNFDSSPLSSAFGQ, NNLEVLLLSSNGFTGQVPSSIRNL, TKLTQLNLPHNKLTGDLPSLVQNL, TKLLALDLSYNQFSGTIPSSFFTM, FLSYLDLSENHLTGSFEISNSS, SKLENLNLGNNHFETEIIDPVLRL, NLRYLSLSFLNTSHPIDLSIFSP, LQSLTHLDLHGNSLTLTSVYSDIDFPK, MEILLLSGCNISEFPRFLKSL, KKLWYLDLSSNRIKGNVPDWIWSL, LLVSLDLSNNSFTGFNGSLDHV, and NSSVQVLDIALNSFKGSFPNPPVSI. Residue N204 is glycosylated (N-linked (GlcNAc...) asparagine). The N-linked (GlcNAc...) asparagine glycan is linked to N242. N292 carries an N-linked (GlcNAc...) asparagine glycan. 10 N-linked (GlcNAc...) asparagine glycosylation sites follow: N337, N344, N353, N379, N384, N397, N410, N421, N466, and N481. Residues 378–397 form an LRR 13; degenerate repeat; that stretch reads INLSAWNNSFTGDIPLSVCN. LRR repeat units follow at residues 398-419, 420-443, 445-467, 469-491, 492-516, 519-543, 588-612, 613-636, 637-660, and 662-685; these read RTSLDVLDLSYNNFTGSIPPCM, GNFTIVNLRKNKLEGNIPDEFYSG, LTQTLDVGYNQLTGELPRSLLNC, FIRFLSVDHNRINDSFPLWLKAL, PNLKVLTLRSNSFHGPMSPPDDQSS, FPKLQILEISHNRFTGSLPTNYFAN, LTFYSAIDFSGNKLEGEIPESIGLL, KTLIALNLSNNSFTGHIPMSFANV, TELESLDLSGNKLSGEIPQELGRL, and YLAYIDVSDNQLTGKIPQGTQIIG. The N-linked (GlcNAc...) asparagine glycan is linked to N543. N-linked (GlcNAc...) asparagine glycosylation is found at N619, N622, and N635. The chain crosses the membrane as a helical span at residues 730–750; sequence AAIGYGPGVLFGLAIGHVVAL. Residues 751-771 lie on the Cytoplasmic side of the membrane; the sequence is YKPGWFIKNNGQNRLRGIRHP.

Belongs to the RLP family.

The protein resides in the cell membrane. The chain is Receptor like protein 22 from Arabidopsis thaliana (Mouse-ear cress).